A 2042-amino-acid chain; its full sequence is Cell adhesion molecule DSCAML1 (2042 aa).

Residues 1 to 17 form the signal peptide; the sequence is MWLVTFFLLYSLRKAHT. At 18–1592 the chain is on the extracellular side; it reads EDVGTSLYFV…AQGEGDDVKK (1575 aa). N-linked (GlcNAc...) asparagine glycans are attached at residues Asn-28 and Asn-78. Ig-like C2-type domains lie at 37-107, 114-216, 227-311, 315-403, 409-502, 507-587, 597-686, 691-785, and 789-886; these read SSTV…AENS, PNIR…ARLS, PTML…GTLT, PLRV…SIIT, PRIV…ARIN, PSIR…LSIS, PPLI…RQLI, PRFV…MFLT, and PAMI…LTVQ. 5 disulfide bridges follow: Cys-46–Cys-102, Cys-145–Cys-197, Cys-248–Cys-295, Cys-337–Cys-387, and Cys-430–Cys-486. N-linked (GlcNAc...) asparagine glycosylation is found at Asn-369, Asn-472, Asn-514, Asn-557, Asn-667, Asn-711, Asn-750, Asn-797, and Asn-810. Cystine bridges form between Cys-527-Cys-576 and Cys-618-Cys-670. Cys-712 and Cys-768 are disulfide-bonded. Cys-811 and Cys-868 are joined by a disulfide. 4 Fibronectin type-III domains span residues 888–985, 990–1089, 1094–1190, and 1194–1289; these read PPDP…TEEA, PPMD…TLED, PPEN…TKED, and PPAG…AGKA. 6 N-linked (GlcNAc...) asparagine glycosylation sites follow: Asn-927, Asn-1083, Asn-1145, Asn-1163, Asn-1276, and Asn-1346. In terms of domain architecture, Ig-like C2-type 10 spans 1279–1368; sequence EKVTIEPAGK…SGYYTCTATN (90 aa). Cys-1312 and Cys-1364 are oxidised to a cystine. Fibronectin type-III domains lie at 1384-1478 and 1479-1579; these read PPDQ…THGR and EPSF…TIPP. N-linked (GlcNAc...) asparagine glycans are attached at residues Asn-1493, Asn-1532, and Asn-1562. Residues 1593–1613 form a helical membrane-spanning segment; sequence LFTIACPIILATLGVALLFII. Over 1614-2042 the chain is Cytoplasmic; the sequence is RKKRKEKRLK…GAYSKSYTLV (429 aa). 4 disordered regions span residues 1716 to 1742, 1781 to 1805, 1841 to 1865, and 1940 to 2042; these read PLIDMSDIRPGTNPVSRKSVKSAHSTR, SDSYSASLSQDTDKGRNSMVSTESA, SSDQMTTGTTDNADSMTSMSTPSEP, and PPAR…YTLV. Positions 1733–1742 are enriched in basic residues; the sequence is KSVKSAHSTR. 2 stretches are compositionally biased toward polar residues: residues 1781–1790 and 1841–1863; these read SDSYSASLSQ and SSDQMTTGTTDNADSMTSMSTPS. The segment covering 1951–1960 has biased composition (pro residues); the sequence is AKPPGLPPPS. The span at 1961–1983 shows a compositional bias: low complexity; it reads SSSSSTTLPQRTLPMPTAASTAP. Residues 1984–1995 show a composition bias toward pro residues; it reads APAPAPAAPAEP. 2 stretches are compositionally biased toward low complexity: residues 1996–2005 and 2023–2034; these read PANTTTTTTT and GAGRAQKQGAGA.

As to quaternary structure, homodimer; mediates homophilic interactions to promote cell adhesion. In terms of tissue distribution, SDK1, SDK2, DSCAM and DSCAML1 are expressed in non-overlapping subsets of interneurons and retinal ganglion cells (RGCs) that form synapses in distinct inner plexiform layer (IPL) sublaminae.

Its subcellular location is the cell membrane. It localises to the synapse. In terms of biological role, cell adhesion molecule that plays a role in neuronal self-avoidance. Promotes repulsion between specific neuronal processes of either the same cell or the same subtype of cells. Adhesion molecule that promotes lamina-specific synaptic connections in the retina: expressed in specific subsets of interneurons and retinal ganglion cells (RGCs) and promotes synaptic connectivity via homophilic interactions. The chain is Cell adhesion molecule DSCAML1 (DSCAML1) from Gallus gallus (Chicken).